The primary structure comprises 436 residues: GTPase Der (436 aa).

2 EngA-type G domains span residues 4–167 (PIVA…DEET) and 176–351 (IRLS…ENHK). GTP contacts are provided by residues 10-17 (GRPNVGKS), 57-61 (DTGGI), 119-122 (NKVD), 182-189 (GRPNVGKS), 229-233 (DTAGM), and 294-297 (NKWD). The region spanning 352–436 (KRVQSSTLNE…PIHIIPRRRN (85 aa)) is the KH-like domain.

The protein belongs to the TRAFAC class TrmE-Era-EngA-EngB-Septin-like GTPase superfamily. EngA (Der) GTPase family. Associates with the 50S ribosomal subunit.

In terms of biological role, GTPase that plays an essential role in the late steps of ribosome biogenesis. The sequence is that of GTPase Der from Staphylococcus haemolyticus (strain JCSC1435).